Here is a 188-residue protein sequence, read N- to C-terminus: NAD(P)H-quinone oxidoreductase subunit 6, chloroplastic (188 aa).

Helical transmembrane passes span 10 to 30 (GILLIIELGILLGSMGVILLN), 32 to 52 (IVQSAFSLGLTFISISLLYLV), 61 to 81 (AQVLIYVGAINVLIVFSVMLI), 97 to 117 (GNNITLIVCTSLFLFLVSIIL), and 153 to 173 (FLLPFELLSVLLLVALVGAIT).

This sequence belongs to the complex I subunit 6 family. In terms of assembly, NDH is composed of at least 16 different subunits, 5 of which are encoded in the nucleus.

It is found in the plastid. It localises to the chloroplast thylakoid membrane. It catalyses the reaction a plastoquinone + NADH + (n+1) H(+)(in) = a plastoquinol + NAD(+) + n H(+)(out). The catalysed reaction is a plastoquinone + NADPH + (n+1) H(+)(in) = a plastoquinol + NADP(+) + n H(+)(out). Its function is as follows. NDH shuttles electrons from NAD(P)H:plastoquinone, via FMN and iron-sulfur (Fe-S) centers, to quinones in the photosynthetic chain and possibly in a chloroplast respiratory chain. The immediate electron acceptor for the enzyme in this species is believed to be plastoquinone. Couples the redox reaction to proton translocation, and thus conserves the redox energy in a proton gradient. The protein is NAD(P)H-quinone oxidoreductase subunit 6, chloroplastic (ndhG) of Psilotum nudum (Whisk fern).